A 359-amino-acid polypeptide reads, in one-letter code: MTSTVDVLAYIPSPPQGVWYVGPVALRAYALFIIVGIVVAIVWGDRRWVARGGEKGTVLDIAIWAVPFGLIGGRLYHVMTDWPTYFGEGGDPVDALKVWQGGLGIWGAVALGGVGAWIGCRRRGIPLPALGDAVAPAILLAQAIGRLGNYFNQELYGRETEVPWGLEIFERRNDVGQVSPQLIDGVSTGEVAFVVHPTFLYEALWNVLIVLLLVWVDRRFRIGHGRLFALYVAGYCAGRFWIELMRSDHASLIAGVRVNSFTSALVFVAALVYFFAATKGREDPAELRPADGGPVGGGGEPVDGEIAQKEPEKNVEDAGKDEGTSASEPVSDDKAASTASTGGEAGTKTIDSKKDDAND.

The next 4 membrane-spanning stretches (helical) occupy residues 24–44 (VALR…IVWG), 58–78 (VLDI…LYHV), 98–118 (VWQG…GAWI), and 124–144 (GIPL…AQAI). An a 1,2-diacyl-sn-glycero-3-phospho-(1'-sn-glycerol)-binding site is contributed by R146. 3 helical membrane-spanning segments follow: residues 193–213 (FVVH…VLLL), 222–243 (IGHG…FWIE), and 258–278 (VNSF…FAAT). The segment at 284–359 (PAELRPADGG…IDSKKDDAND (76 aa)) is disordered. The span at 306 to 323 (IAQKEPEKNVEDAGKDEG) shows a compositional bias: basic and acidic residues. Over residues 336–349 (ASTASTGGEAGTKT) the composition is skewed to low complexity. Over residues 350–359 (IDSKKDDAND) the composition is skewed to basic and acidic residues.

Belongs to the Lgt family.

The protein localises to the cell membrane. It carries out the reaction L-cysteinyl-[prolipoprotein] + a 1,2-diacyl-sn-glycero-3-phospho-(1'-sn-glycerol) = an S-1,2-diacyl-sn-glyceryl-L-cysteinyl-[prolipoprotein] + sn-glycerol 1-phosphate + H(+). It participates in protein modification; lipoprotein biosynthesis (diacylglyceryl transfer). Its function is as follows. Catalyzes the transfer of the diacylglyceryl group from phosphatidylglycerol to the sulfhydryl group of the N-terminal cysteine of a prolipoprotein, the first step in the formation of mature lipoproteins. This Rhodococcus jostii (strain RHA1) protein is Phosphatidylglycerol--prolipoprotein diacylglyceryl transferase.